We begin with the raw amino-acid sequence, 347 residues long: Holliday junction branch migration complex subunit RuvB (347 aa).

The interval 1-186 is large ATPase domain (RuvB-L); that stretch reads MKDENSISFL…FGITARFELY (186 aa). ATP is bound by residues leucine 25, arginine 26, glycine 67, lysine 70, threonine 71, threonine 72, 133–135, arginine 176, tyrosine 186, and arginine 223; that span reads EDY. Threonine 71 lines the Mg(2+) pocket. Positions 187 to 257 are small ATPAse domain (RuvB-S); sequence SEIELVEIIK…IVSIGLEMLR (71 aa). Residues 260 to 347 are head domain (RuvB-H); it reads GEGLDEQDRN…GLNENQRVSF (88 aa). Positions 315 and 320 each coordinate DNA.

Belongs to the RuvB family. In terms of assembly, homohexamer. Forms an RuvA(8)-RuvB(12)-Holliday junction (HJ) complex. HJ DNA is sandwiched between 2 RuvA tetramers; dsDNA enters through RuvA and exits via RuvB. An RuvB hexamer assembles on each DNA strand where it exits the tetramer. Each RuvB hexamer is contacted by two RuvA subunits (via domain III) on 2 adjacent RuvB subunits; this complex drives branch migration. In the full resolvosome a probable DNA-RuvA(4)-RuvB(12)-RuvC(2) complex forms which resolves the HJ.

Its subcellular location is the cytoplasm. It catalyses the reaction ATP + H2O = ADP + phosphate + H(+). Functionally, the RuvA-RuvB-RuvC complex processes Holliday junction (HJ) DNA during genetic recombination and DNA repair, while the RuvA-RuvB complex plays an important role in the rescue of blocked DNA replication forks via replication fork reversal (RFR). RuvA specifically binds to HJ cruciform DNA, conferring on it an open structure. The RuvB hexamer acts as an ATP-dependent pump, pulling dsDNA into and through the RuvAB complex. RuvB forms 2 homohexamers on either side of HJ DNA bound by 1 or 2 RuvA tetramers; 4 subunits per hexamer contact DNA at a time. Coordinated motions by a converter formed by DNA-disengaged RuvB subunits stimulates ATP hydrolysis and nucleotide exchange. Immobilization of the converter enables RuvB to convert the ATP-contained energy into a lever motion, pulling 2 nucleotides of DNA out of the RuvA tetramer per ATP hydrolyzed, thus driving DNA branch migration. The RuvB motors rotate together with the DNA substrate, which together with the progressing nucleotide cycle form the mechanistic basis for DNA recombination by continuous HJ branch migration. Branch migration allows RuvC to scan DNA until it finds its consensus sequence, where it cleaves and resolves cruciform DNA. In Borreliella burgdorferi (strain ATCC 35210 / DSM 4680 / CIP 102532 / B31) (Borrelia burgdorferi), this protein is Holliday junction branch migration complex subunit RuvB.